The sequence spans 33 residues: Protamine-M6/M7 (33 aa).

The segment at 1–33 (PRRRRETSRPIRRRRRARRAPIRRRRRVVRRRR) is disordered.

As to expression, testis.

The protein resides in the nucleus. Its subcellular location is the chromosome. Its function is as follows. Protamines substitute for histones in the chromatin of sperm during the haploid phase of spermatogenesis. They compact sperm DNA into a highly condensed, stable and inactive complex. In Mugil cephalus (Flathead mullet), this protein is Protamine-M6/M7.